Here is a 106-residue protein sequence, read N- to C-terminus: Iron-sulfur cluster assembly protein CyaY (106 aa).

This sequence belongs to the frataxin family.

In terms of biological role, involved in iron-sulfur (Fe-S) cluster assembly. May act as a regulator of Fe-S biogenesis. This Salmonella dublin (strain CT_02021853) protein is Iron-sulfur cluster assembly protein CyaY.